The primary structure comprises 149 residues: Calmodulin (149 aa).

A2 is modified (N-acetylalanine). EF-hand domains are found at residues 8–43, 44–79, 81–116, and 117–149; these read EQIA…LGQN, PTEA…KMKD, DSEE…LGEK, and LSED…MMSK. 20 residues coordinate Ca(2+): D21, D23, D25, T27, E32, D57, D59, N61, T63, E68, D94, D96, N98, Y100, E105, D130, D132, D134, Q136, and E141.

This sequence belongs to the calmodulin family.

Calmodulin mediates the control of a large number of enzymes, ion channels and other proteins by Ca(2+). Among the enzymes to be stimulated by the calmodulin-Ca(2+) complex are a number of protein kinases and phosphatases. The polypeptide is Calmodulin (CMD1) (Blastocladiella emersonii (Aquatic fungus)).